Consider the following 306-residue polypeptide: Ornithine carbamoyltransferase (306 aa).

Carbamoyl phosphate-binding positions include 54 to 57, Gln81, Arg105, and 132 to 135; these read STRT and HPLQ. Residues Asn162, Asp226, and 230-231 each bind L-ornithine; that span reads SM. Carbamoyl phosphate contacts are provided by residues 266-267 and Arg294; that span reads CL.

The protein belongs to the aspartate/ornithine carbamoyltransferase superfamily. OTCase family.

It is found in the cytoplasm. It catalyses the reaction carbamoyl phosphate + L-ornithine = L-citrulline + phosphate + H(+). It functions in the pathway amino-acid biosynthesis; L-arginine biosynthesis; L-arginine from L-ornithine and carbamoyl phosphate: step 1/3. Reversibly catalyzes the transfer of the carbamoyl group from carbamoyl phosphate (CP) to the N(epsilon) atom of ornithine (ORN) to produce L-citrulline. In Sulfurisphaera tokodaii (strain DSM 16993 / JCM 10545 / NBRC 100140 / 7) (Sulfolobus tokodaii), this protein is Ornithine carbamoyltransferase.